Consider the following 435-residue polypeptide: D-inositol 3-phosphate glycosyltransferase (435 aa).

Residue histidine 25 participates in 1D-myo-inositol 3-phosphate binding. Residues 31–32 (QP) and glycine 39 each bind UDP-N-acetyl-alpha-D-glucosamine. 1D-myo-inositol 3-phosphate contacts are provided by residues 36–41 (DAGGMN), lysine 94, tyrosine 127, threonine 151, and arginine 171. Residues arginine 245 and lysine 250 each contribute to the UDP-N-acetyl-alpha-D-glucosamine site. Mg(2+)-binding residues include tyrosine 320, arginine 321, and alanine 323. Glutamate 333 and glutamate 341 together coordinate UDP-N-acetyl-alpha-D-glucosamine. A Mg(2+)-binding site is contributed by threonine 347.

Belongs to the glycosyltransferase group 1 family. MshA subfamily. In terms of assembly, homodimer.

The enzyme catalyses 1D-myo-inositol 3-phosphate + UDP-N-acetyl-alpha-D-glucosamine = 1D-myo-inositol 2-acetamido-2-deoxy-alpha-D-glucopyranoside 3-phosphate + UDP + H(+). Catalyzes the transfer of a N-acetyl-glucosamine moiety to 1D-myo-inositol 3-phosphate to produce 1D-myo-inositol 2-acetamido-2-deoxy-glucopyranoside 3-phosphate in the mycothiol biosynthesis pathway. This Streptosporangium roseum (strain ATCC 12428 / DSM 43021 / JCM 3005 / KCTC 9067 / NCIMB 10171 / NRRL 2505 / NI 9100) protein is D-inositol 3-phosphate glycosyltransferase.